An 875-amino-acid polypeptide reads, in one-letter code: MYQTTAALRSAFLEYFRTNGHQVVDSSSLVPANDPTLLFTNAGMNQFKDVFLGADKRSYSRATSSQRCVRAGGKHNDLDNVGYTARHHTFFEMLGNFSFGDYFKEEAIHFAWTFLTEELKLPKERLCVTIYDTDDEAFEIWNKKIGVAAENIIRIGDNKGAAYASDNFWQMGDTGPCGPCSEIFYDHGDHIWGGRPGTPEEDGDRFIEIWNIVFMQYNRQADGEMKPLPKPSVDTGMGIERIAAIMQGVHSNYEIDIFQALIKKAAAILGVTDLENKSLRVIADHIRSCAFLIADGVMPSNEGRGYVLRRIIRRAVRHGNKLGATESFFYKLVPTLIEVMGADAAKGLQETQAIVEKSLKAEEEQFARTLERGLGILDAALNELATNVLDGETAFKLYDTYGFPVDLTADVCRERDITVDEAGFEVAMAAQRSRAQAAGQFETDYNEGLIIDEQSGFTGYTDLNNQATVTAIFKAGESVDSIVAGDDVVIVLDNTPFYGESGGQCGDEGVLIADGIEFTVTDTQKYGQAIGHIGRVATGTVKVGQVVTANVDKKLRHRTELNHSVTHLLHAALRQVLGTHVSQKGSLVDPERLRFDFSHFEGVKAHELKEVEELVNTQIRRNHELTAEVMDIETAKEKGAMALFGEKYDSEVRVVTMGDFSIELCGGTHVGRTGDIGLFKITSEGGIAAGIRRIEAVTGAAAMAYVAKQQAQLEEAAALLKGDSASVVAKLKAQLDKTKLLEKELSQLKDKLAAATSADLAGEAVDVNGVKVLVKKLEGVDAGALRGLQDELKQKLQSGIVVLAIAGEDKVNMIVGVTKDLTGKVKAGELVASIAVQVGGKGGGRPDMAQAGGSQPENLDAALEQVIPWISAKLA.

Residues His-563, His-567, Cys-665, and His-669 each contribute to the Zn(2+) site.

It belongs to the class-II aminoacyl-tRNA synthetase family. Requires Zn(2+) as cofactor.

The protein resides in the cytoplasm. The catalysed reaction is tRNA(Ala) + L-alanine + ATP = L-alanyl-tRNA(Ala) + AMP + diphosphate. Its function is as follows. Catalyzes the attachment of alanine to tRNA(Ala) in a two-step reaction: alanine is first activated by ATP to form Ala-AMP and then transferred to the acceptor end of tRNA(Ala). Also edits incorrectly charged Ser-tRNA(Ala) and Gly-tRNA(Ala) via its editing domain. The sequence is that of Alanine--tRNA ligase from Shewanella pealeana (strain ATCC 700345 / ANG-SQ1).